An 81-amino-acid polypeptide reads, in one-letter code: Cytochrome b559 subunit alpha (81 aa).

Residues 21 to 35 (VIHSITIPALFIAGW) traverse the membrane as a helical segment. Histidine 23 contributes to the heme binding site.

It belongs to the PsbE/PsbF family. As to quaternary structure, heterodimer of an alpha subunit and a beta subunit. PSII is composed of 1 copy each of membrane proteins PsbA, PsbB, PsbC, PsbD, PsbE, PsbF, PsbH, PsbI, PsbJ, PsbK, PsbL, PsbM, PsbT, PsbX, PsbY, PsbZ, Psb30/Ycf12, at least 3 peripheral proteins of the oxygen-evolving complex and a large number of cofactors. It forms dimeric complexes. The cofactor is heme b.

Its subcellular location is the plastid. It is found in the chloroplast thylakoid membrane. This b-type cytochrome is tightly associated with the reaction center of photosystem II (PSII). PSII is a light-driven water:plastoquinone oxidoreductase that uses light energy to abstract electrons from H(2)O, generating O(2) and a proton gradient subsequently used for ATP formation. It consists of a core antenna complex that captures photons, and an electron transfer chain that converts photonic excitation into a charge separation. The protein is Cytochrome b559 subunit alpha of Tetradesmus obliquus (Green alga).